The following is a 192-amino-acid chain: Ion-translocating oxidoreductase complex subunit A (192 aa).

The next 6 membrane-spanning stretches (helical) occupy residues 5-25 (LLLL…FLGL), 39-59 (IGMS…SYLV), 65-85 (LPFE…AVVV), 102-122 (ALGI…VALL), 134-154 (AIYG…FSAM), and 171-191 (AIAM…TGLV).

It belongs to the NqrDE/RnfAE family. The complex is composed of six subunits: RnfA, RnfB, RnfC, RnfD, RnfE and RnfG.

The protein resides in the cell inner membrane. Part of a membrane-bound complex that couples electron transfer with translocation of ions across the membrane. This Shewanella sediminis (strain HAW-EB3) protein is Ion-translocating oxidoreductase complex subunit A.